The sequence spans 172 residues: SsrA-binding protein (172 aa).

This sequence belongs to the SmpB family.

It is found in the cytoplasm. Functionally, required for rescue of stalled ribosomes mediated by trans-translation. Binds to transfer-messenger RNA (tmRNA), required for stable association of tmRNA with ribosomes. tmRNA and SmpB together mimic tRNA shape, replacing the anticodon stem-loop with SmpB. tmRNA is encoded by the ssrA gene; the 2 termini fold to resemble tRNA(Ala) and it encodes a 'tag peptide', a short internal open reading frame. During trans-translation Ala-aminoacylated tmRNA acts like a tRNA, entering the A-site of stalled ribosomes, displacing the stalled mRNA. The ribosome then switches to translate the ORF on the tmRNA; the nascent peptide is terminated with the 'tag peptide' encoded by the tmRNA and targeted for degradation. The ribosome is freed to recommence translation, which seems to be the essential function of trans-translation. The protein is SsrA-binding protein of Dehalococcoides mccartyi (strain ATCC BAA-2266 / KCTC 15142 / 195) (Dehalococcoides ethenogenes (strain 195)).